A 248-amino-acid polypeptide reads, in one-letter code: tRNA (guanine-N(1)-)-methyltransferase (248 aa).

S-adenosyl-L-methionine-binding positions include G113 and 133-138; that span reads IGDFVL.

Belongs to the RNA methyltransferase TrmD family. As to quaternary structure, homodimer.

Its subcellular location is the cytoplasm. The catalysed reaction is guanosine(37) in tRNA + S-adenosyl-L-methionine = N(1)-methylguanosine(37) in tRNA + S-adenosyl-L-homocysteine + H(+). Specifically methylates guanosine-37 in various tRNAs. This is tRNA (guanine-N(1)-)-methyltransferase from Dehalococcoides mccartyi (strain ATCC BAA-2100 / JCM 16839 / KCTC 5957 / BAV1).